The sequence spans 289 residues: ATP synthase gamma chain (289 aa).

Belongs to the ATPase gamma chain family. In terms of assembly, F-type ATPases have 2 components, CF(1) - the catalytic core - and CF(0) - the membrane proton channel. CF(1) has five subunits: alpha(3), beta(3), gamma(1), delta(1), epsilon(1). CF(0) has three main subunits: a, b and c.

It is found in the cell membrane. Functionally, produces ATP from ADP in the presence of a proton gradient across the membrane. The gamma chain is believed to be important in regulating ATPase activity and the flow of protons through the CF(0) complex. The polypeptide is ATP synthase gamma chain (Hamiltonella defensa subsp. Acyrthosiphon pisum (strain 5AT)).